We begin with the raw amino-acid sequence, 194 residues long: dTTP/UTP pyrophosphatase (194 aa).

The active-site Proton acceptor is D77.

This sequence belongs to the Maf family. YhdE subfamily. The cofactor is a divalent metal cation.

It is found in the cytoplasm. It carries out the reaction dTTP + H2O = dTMP + diphosphate + H(+). It catalyses the reaction UTP + H2O = UMP + diphosphate + H(+). In terms of biological role, nucleoside triphosphate pyrophosphatase that hydrolyzes dTTP and UTP. May have a dual role in cell division arrest and in preventing the incorporation of modified nucleotides into cellular nucleic acids. The chain is dTTP/UTP pyrophosphatase from Flavobacterium johnsoniae (strain ATCC 17061 / DSM 2064 / JCM 8514 / BCRC 14874 / CCUG 350202 / NBRC 14942 / NCIMB 11054 / UW101) (Cytophaga johnsonae).